We begin with the raw amino-acid sequence, 619 residues long: tRNA (guanine(37)-N(1))-methyltransferase 2 (619 aa).

The N-terminal 10 residues, 1–10 (MVSKLSLFRA), are a transit peptide targeting the mitochondrion. S-adenosyl-L-methionine contacts are provided by residues arginine 434, 472–473 (DL), 500–501 (DG), and asparagine 523.

Belongs to the class I-like SAM-binding methyltransferase superfamily. TRM5/TYW2 family. As to quaternary structure, monomer.

It is found in the mitochondrion matrix. The protein localises to the nucleus. It localises to the cytoplasm. It carries out the reaction guanosine(37) in tRNA + S-adenosyl-L-methionine = N(1)-methylguanosine(37) in tRNA + S-adenosyl-L-homocysteine + H(+). Its function is as follows. Specifically methylates the N1 position of guanosine-37 in various cytoplasmic and mitochondrial tRNAs. Methylation is not dependent on the nature of the nucleoside 5' of the target nucleoside. This is the first step in the biosynthesis of wybutosine (yW), a modified base adjacent to the anticodon of tRNAs and required for accurate decoding. In Arabidopsis thaliana (Mouse-ear cress), this protein is tRNA (guanine(37)-N(1))-methyltransferase 2.